Consider the following 469-residue polypeptide: Calcium-binding mitochondrial carrier protein SCaMC-2-B (469 aa).

Topologically, residues 1-189 (MLCLCLYVPV…EKNTGMWWRH (189 aa)) are mitochondrial intermembrane. EF-hand domains follow at residues 47-80 (SYRKWRKKVVKAGDKDLDGQLDFEEFVHYLRDHE), 78-113 (DHEKKLRLVFKSLDKKNDGHIDSQEIMQSLRDLGVH), and 114-149 (ISEEQAEKILKSMDKNGTMTIDWNEWRDYHLLHPAE). Ca(2+)-binding residues include D60, D62, D64, Q66, and E71. Solcar repeat units follow at residues 184 to 270 (GMWW…IKRL), 278 to 363 (LGIL…LKNS), and 375 to 463 (PGVF…LKIT). Residues 190–207 (LVAGGGAGAVSRTCTAPL) traverse the membrane as a helical segment. Residues 208 to 244 (DRLKVLMQVHATRSNSMGIAGGFTQMIREGGLRSLWR) are Mitochondrial matrix-facing. Residues 245 to 264 (GNGINVLKIAPESAIKFMAY) traverse the membrane as a helical segment. The Mitochondrial intermembrane segment spans residues 265–287 (EQIKRLIGSNQETLGILERLVSG). Residues 288-301 (SLAGAIAQSSIYPM) form a helical membrane-spanning segment. The Mitochondrial matrix segment spans residues 302-337 (EVLKTRLALGRTGQYSGIADCAKHIFKKEGMTAFYK). The helical transmembrane segment at 338–357 (GYIPNMLGIIPYAGIDLAVY) threads the bilayer. The Mitochondrial intermembrane segment spans residues 358–380 (ETLKNSWLQRFATDSADPGVFVL). A helical transmembrane segment spans residues 381-398 (LACGTMSSTCGQLASYPL). Over 399–437 (ALVRTRMQAQASQEGSPQMTMSGLFRHIVRTEGAIGLYR) the chain is Mitochondrial matrix. Residues 438 to 457 (GLAPNFMKVIPAVSISYVVY) traverse the membrane as a helical segment. Residues 458 to 469 (ENLKITLGVQSR) are Mitochondrial intermembrane-facing.

The protein belongs to the mitochondrial carrier (TC 2.A.29) family.

The protein localises to the mitochondrion inner membrane. Calcium-dependent mitochondrial solute carrier. The protein is Calcium-binding mitochondrial carrier protein SCaMC-2-B (slc25a25b) of Danio rerio (Zebrafish).